Consider the following 248-residue polypeptide: Proteasome subunit alpha type-7 (248 aa).

Residue Ser-130 is glycosylated (O-linked (GlcNAc) serine). Position 153 is a phosphotyrosine (Tyr-153). Position 227 is an N6-acetyllysine (Lys-227).

Belongs to the peptidase T1A family. In terms of assembly, the 26S proteasome consists of a 20S proteasome core and two 19S regulatory subunits. The 20S proteasome core is a barrel-shaped complex made of 28 subunits that are arranged in four stacked rings. The two outer rings are each formed by seven alpha subunits, and the two inner rings are formed by seven beta subunits. The proteolytic activity is exerted by three beta-subunits PSMB5, PSMB6 and PSMB7. PSMA7 interacts directly with the PSMG1-PSMG2 heterodimer which promotes 20S proteasome assembly. Interacts with HIF1A. Interacts with RAB7A. Interacts with PRKN. Interacts with ABL1 and ABL2. Interacts with EMAP2. Interacts with MAVS.

The protein localises to the cytoplasm. Its subcellular location is the nucleus. Its function is as follows. Component of the 20S core proteasome complex involved in the proteolytic degradation of most intracellular proteins. This complex plays numerous essential roles within the cell by associating with different regulatory particles. Associated with two 19S regulatory particles, forms the 26S proteasome and thus participates in the ATP-dependent degradation of ubiquitinated proteins. The 26S proteasome plays a key role in the maintenance of protein homeostasis by removing misfolded or damaged proteins that could impair cellular functions, and by removing proteins whose functions are no longer required. Associated with the PA200 or PA28, the 20S proteasome mediates ubiquitin-independent protein degradation. This type of proteolysis is required in several pathways including spermatogenesis (20S-PA200 complex) or generation of a subset of MHC class I-presented antigenic peptides (20S-PA28 complex). Inhibits the transactivation function of HIF-1A under both normoxic and hypoxia-mimicking conditions. The interaction with EMAP2 increases the proteasome-mediated HIF-1A degradation under the hypoxic conditions. Plays a role in hepatitis C virus internal ribosome entry site-mediated translation. Mediates nuclear translocation of the androgen receptor (AR) and thereby enhances androgen-mediated transactivation. Promotes MAVS degradation and thereby negatively regulates MAVS-mediated innate immune response. The polypeptide is Proteasome subunit alpha type-7 (PSMA7) (Bos taurus (Bovine)).